We begin with the raw amino-acid sequence, 186 residues long: Fanconi anemia core complex-associated protein 20 (186 aa).

Disordered stretches follow at residues Met-1 to Leu-30 and Thr-50 to Thr-90. The segment covering Leu-7 to Pro-16 has biased composition (basic residues). Phosphoserine is present on Ser-119. The UBZ2-type zinc-finger motif lies at Leu-150 to Trp-186. Cys-153, Cys-156, His-172, and Cys-176 together coordinate Zn(2+).

Component of the Fanconi anemia (FA) complex. Interacts with FANCA; interaction is direct. Interacts with REV1.

The protein resides in the nucleus. It is found in the chromosome. Functionally, component of the Fanconi anemia (FA) complex required to recruit the FA complex to DNA interstrand cross-links (ICLs) and promote ICLs repair. Following DNA damage recognizes and binds 'Lys-63'-linked ubiquitin generated by RNF8 at ICLs and recruits other components of the FA complex. Promotes translesion synthesis via interaction with REV1. In Mus musculus (Mouse), this protein is Fanconi anemia core complex-associated protein 20.